Consider the following 253-residue polypeptide: 5-oxoprolinase subunit A (253 aa).

It belongs to the LamB/PxpA family. Forms a complex composed of PxpA, PxpB and PxpC.

The catalysed reaction is 5-oxo-L-proline + ATP + 2 H2O = L-glutamate + ADP + phosphate + H(+). Functionally, catalyzes the cleavage of 5-oxoproline to form L-glutamate coupled to the hydrolysis of ATP to ADP and inorganic phosphate. The sequence is that of 5-oxoprolinase subunit A from Shouchella clausii (strain KSM-K16) (Alkalihalobacillus clausii).